The primary structure comprises 281 residues: Shikimate dehydrogenase (NADP(+)) (281 aa).

Shikimate contacts are provided by residues 20-22 (SRS) and T67. Catalysis depends on K71, which acts as the Proton acceptor. D83 serves as a coordination point for NADP(+). The shikimate site is built by N92 and D108. NADP(+) is bound by residues 133–137 (GAGGA), 157–162 (NRTEAR), and M225. Shikimate is bound at residue Y227. G248 serves as a coordination point for NADP(+).

Belongs to the shikimate dehydrogenase family. In terms of assembly, homodimer.

The enzyme catalyses shikimate + NADP(+) = 3-dehydroshikimate + NADPH + H(+). It participates in metabolic intermediate biosynthesis; chorismate biosynthesis; chorismate from D-erythrose 4-phosphate and phosphoenolpyruvate: step 4/7. Its function is as follows. Involved in the biosynthesis of the chorismate, which leads to the biosynthesis of aromatic amino acids. Catalyzes the reversible NADPH linked reduction of 3-dehydroshikimate (DHSA) to yield shikimate (SA). This Paracidovorax citrulli (strain AAC00-1) (Acidovorax citrulli) protein is Shikimate dehydrogenase (NADP(+)).